We begin with the raw amino-acid sequence, 420 residues long: MKLSEPLLVSLAAFSQAVTALVAFPGAEGFGANAIGGRNGQVYVVTNLNDSGTGSLRDAVSATDRIVVFAVGGVIKISDRIVVSKRVTILGQTAPGDGITVYGNGWSFSNADDAIVRYIRIRMGKGGSSGKDALGIAEGNRMIFDHVSVSWGRDETFSINGDASNITVQNSIIAQGLETHSCGGLMQTDGGVSLFRNLYIDNKTRNPKVKGVNEFTNNVVYNWGGGGGYIAGDSAGQSYANIIGNYFISGPSTSVTAFTRGNANFHGYVQNNYYDPDKDGQLDGFELGVSSSNYGGMAIMSSKYNYPAVAYTMSPAEAVTYVTKYAGASKVRDSVDTQLIAQVQSWGTEGGLISDEATMGGPGTLNGGTPAKDTDGDGIPDEAEKQLGTDPNTNDSMKLHSSGYTYLEVWANSLVPSTYH.

The N-terminal stretch at 1 to 20 (MKLSEPLLVSLAAFSQAVTA) is a signal peptide. N-linked (GlcNAc...) asparagine glycosylation is found at Asn-49, Asn-165, and Asn-202. The active site involves Arg-205. Residues 262-297 (NANFHGYVQNNYYDPDKDGQLDGFELGVSSSNYGGM) enclose the EF-hand domain. 5 residues coordinate Ca(2+): Asp-275, Asp-277, Asp-279, Gln-281, and Glu-286. A disordered region spans residues 358 to 396 (TMGGPGTLNGGTPAKDTDGDGIPDEAEKQLGTDPNTNDS). Residue Asn-394 is glycosylated (N-linked (GlcNAc...) asparagine).

This sequence belongs to the polysaccharide lyase 1 family. It depends on Ca(2+) as a cofactor.

The protein resides in the secreted. It catalyses the reaction Eliminative cleavage of (1-&gt;4)-alpha-D-galacturonan to give oligosaccharides with 4-deoxy-alpha-D-galact-4-enuronosyl groups at their non-reducing ends.. In terms of biological role, pectinolytic enzyme consist of four classes of enzymes: pectin lyase, polygalacturonase, pectin methylesterase and rhamnogalacturonase. Among pectinolytic enzymes, pectin lyase is the most important in depolymerization of pectin, since it cleaves internal glycosidic bonds of highly methylated pectins. Favors pectate, the anion, over pectin, the methyl ester. This chain is Probable pectate lyase C (plyC), found in Aspergillus fumigatus (strain ATCC MYA-4609 / CBS 101355 / FGSC A1100 / Af293) (Neosartorya fumigata).